The chain runs to 339 residues: MNASDASMTVIGAGSYGTALAITLARNGHRVVLWGHNPTHIQALQAARCNQAFLPDVPFPDSLQLETNLAHALAASRNVLVVVPSHVFGDVLRQLKPHLRADARIVWATKGLEAETGRLLQDVAREALGETIPLAVVSGPTFAKELAAGMPTAIALASPDSEFADDLQQLLHCGKSFRVYSNPDFIGVQLGGAVKNVIAIGAGMSDGIGFGANARTALITRGLAEMTRLGAALGADPTTFMGMAGLGDLVLTCTDNQSRNRRFGMMLGQGMDVQSAQDSIGQVVEGYRNTKEVLALAQRYGVEMPITEQLWQVLYCGKDAREAALSLLGRTRKDETAKL.

NADPH-binding residues include serine 15, tyrosine 16, histidine 36, and lysine 110. Sn-glycerol 3-phosphate is bound by residues lysine 110, glycine 139, and threonine 141. An NADPH-binding site is contributed by alanine 143. Lysine 195, aspartate 248, serine 258, arginine 259, and asparagine 260 together coordinate sn-glycerol 3-phosphate. The active-site Proton acceptor is the lysine 195. Arginine 259 is an NADPH binding site. Residues valine 283 and glutamate 285 each contribute to the NADPH site.

This sequence belongs to the NAD-dependent glycerol-3-phosphate dehydrogenase family.

The protein resides in the cytoplasm. It catalyses the reaction sn-glycerol 3-phosphate + NAD(+) = dihydroxyacetone phosphate + NADH + H(+). The catalysed reaction is sn-glycerol 3-phosphate + NADP(+) = dihydroxyacetone phosphate + NADPH + H(+). It functions in the pathway membrane lipid metabolism; glycerophospholipid metabolism. Its function is as follows. Catalyzes the reduction of the glycolytic intermediate dihydroxyacetone phosphate (DHAP) to sn-glycerol 3-phosphate (G3P), the key precursor for phospholipid synthesis. The polypeptide is Glycerol-3-phosphate dehydrogenase [NAD(P)+] (Pectobacterium atrosepticum (strain SCRI 1043 / ATCC BAA-672) (Erwinia carotovora subsp. atroseptica)).